Reading from the N-terminus, the 981-residue chain is DNA ligase 4 (981 aa).

Positions 320, 322, 327, 380, 424, 484, 489, 506, and 508 each coordinate ATP. Lys322 functions as the N6-AMP-lysine intermediate in the catalytic mechanism. Glu380 provides a ligand contact to Mg(2+). Glu484 provides a ligand contact to Mg(2+). The segment at 544–563 is disordered; that stretch reads SEKNNPSSYESGSDSDSDSE. 2 consecutive BRCT domains span residues 721-819 and 875-980; these read SKAD…PKYV and ERLL…EYAA.

The protein belongs to the ATP-dependent DNA ligase family. It depends on Mg(2+) as a cofactor.

It is found in the nucleus. The catalysed reaction is ATP + (deoxyribonucleotide)n-3'-hydroxyl + 5'-phospho-(deoxyribonucleotide)m = (deoxyribonucleotide)n+m + AMP + diphosphate.. In terms of biological role, DNA ligase involved in DNA non-homologous end joining (NHEJ); required for double-strand break (DSB) repair. The protein is DNA ligase 4 (LIG4) of Eremothecium gossypii (strain ATCC 10895 / CBS 109.51 / FGSC 9923 / NRRL Y-1056) (Yeast).